The sequence spans 299 residues: MLIDYLFRLPLNILFLFSHSFSSFLLPFQLHFMQRAFVIGLIAALLAGIVGSFLMLQRLTLLSDAISHSVLPGLAIAFSFGIPLIFGALLASIISVIIINWIRTESRLKEDTAIGIVFASFFGLGILLISVIQKENKVDLNHFLFGNILGITSEDLQNTSIILAIILLFFISCYRQLKCYTFDPIMAQTIGLPINFLQSTFLILVALTIIVSMKAIGVILVLALLVTPGATGLLIGKSLEYVILTSSIIGVSCSFSGMLLSYLFNIPPGPTIVLITSLIFFILFLIINKKDSTTDSKLF.

The next 8 membrane-spanning stretches (helical) occupy residues 13–33, 36–56, 79–99, 112–132, 151–171, 201–221, 241–261, and 267–287; these read ILFL…LHFM, AFVI…FLML, SFGI…VIII, TAIG…ISVI, ITSE…LFFI, FLIL…VILV, YVIL…MLLS, and PPGP…FLII.

This sequence belongs to the ABC-3 integral membrane protein family.

The protein localises to the plastid. It localises to the cyanelle membrane. This is an uncharacterized protein from Cyanophora paradoxa.